A 239-amino-acid chain; its full sequence is ATP-dependent dethiobiotin synthetase BioD (239 aa).

An ATP-binding site is contributed by 15–20 (EIGKTF). Thr19 lines the Mg(2+) pocket. The active site involves Lys40. ATP-binding positions include Asp57, 118 to 121 (EGVG), and 178 to 179 (NH). Residues Asp57 and Glu118 each coordinate Mg(2+).

Belongs to the dethiobiotin synthetase family. In terms of assembly, homodimer. Mg(2+) serves as cofactor.

It is found in the cytoplasm. It carries out the reaction (7R,8S)-7,8-diammoniononanoate + CO2 + ATP = (4R,5S)-dethiobiotin + ADP + phosphate + 3 H(+). It participates in cofactor biosynthesis; biotin biosynthesis; biotin from 7,8-diaminononanoate: step 1/2. In terms of biological role, catalyzes a mechanistically unusual reaction, the ATP-dependent insertion of CO2 between the N7 and N8 nitrogen atoms of 7,8-diaminopelargonic acid (DAPA, also called 7,8-diammoniononanoate) to form a ureido ring. The chain is ATP-dependent dethiobiotin synthetase BioD from Burkholderia ambifaria (strain ATCC BAA-244 / DSM 16087 / CCUG 44356 / LMG 19182 / AMMD) (Burkholderia cepacia (strain AMMD)).